We begin with the raw amino-acid sequence, 249 residues long: Proteasome subunit alpha type-7 (249 aa).

Belongs to the peptidase T1A family. In terms of assembly, the 26S proteasome consists of a 20S proteasome core and two 19S regulatory subunits. The 20S proteasome core is a barrel-shaped complex made of 28 subunits that are arranged in four stacked rings. The two outer rings are each formed by seven alpha subunits, and the two inner rings are formed by seven beta subunits. The proteolytic activity is exerted by three beta-subunits PSMB5, PSMB6 and PSMB7. PSMA7 interacts directly with the PSMG1-PSMG2 heterodimer which promotes 20S proteasome assembly. Interacts with HIF1A. Interacts with RAB7A. Interacts with PRKN. Interacts with ABL1 and ABL2. Interacts with EMAP2. Interacts with MAVS.

It localises to the cytoplasm. Its subcellular location is the nucleus. Functionally, component of the 20S core proteasome complex involved in the proteolytic degradation of most intracellular proteins. This complex plays numerous essential roles within the cell by associating with different regulatory particles. Associated with two 19S regulatory particles, forms the 26S proteasome and thus participates in the ATP-dependent degradation of ubiquitinated proteins. The 26S proteasome plays a key role in the maintenance of protein homeostasis by removing misfolded or damaged proteins that could impair cellular functions, and by removing proteins whose functions are no longer required. Associated with the PA200 or PA28, the 20S proteasome mediates ubiquitin-independent protein degradation. This type of proteolysis is required in several pathways including spermatogenesis (20S-PA200 complex) or generation of a subset of MHC class I-presented antigenic peptides (20S-PA28 complex). Inhibits the transactivation function of HIF-1A under both normoxic and hypoxia-mimicking conditions. The interaction with EMAP2 increases the proteasome-mediated HIF-1A degradation under the hypoxic conditions. Plays a role in hepatitis C virus internal ribosome entry site-mediated translation. Mediates nuclear translocation of the androgen receptor (AR) and thereby enhances androgen-mediated transactivation. Promotes MAVS degradation and thereby negatively regulates MAVS-mediated innate immune response. This is Proteasome subunit alpha type-7 (PSMA7) from Gallus gallus (Chicken).